We begin with the raw amino-acid sequence, 247 residues long: Fibroblast growth factor 14 (247 aa).

2 disordered regions span residues 1-37 and 216-247; these read MAAA…SKNR and ETVP…CKTT. Basic and acidic residues predominate over residues 15 to 25; it reads QAREQHWDRPS.

This sequence belongs to the heparin-binding growth factors family. As to quaternary structure, interacts with SCN8A. Brain and testis; widely distributed in the developing nervous system. In adult, high levels in the granular layer of the cerebellum, less in hippocampus and olfactory bulb.

Its subcellular location is the nucleus. In terms of biological role, probably involved in nervous system development and function. This Mus musculus (Mouse) protein is Fibroblast growth factor 14 (Fgf14).